The chain runs to 409 residues: Formyl-CoA:oxalate CoA-transferase (409 aa).

CoA-binding positions include 17-18, 71-74, 95-97, arginine 103, and 135-138; these read QS, LNTK, NFG, and KAYE. Residue aspartate 167 is the Nucleophile of the active site. The interval 221–245 is disordered; sequence LAEYPNDDFGDEVPRSGNASGGGQP. 242-244 serves as a coordination point for substrate; that stretch reads GGQ.

It belongs to the CoA-transferase III family. Frc subfamily. Homodimer.

The catalysed reaction is formyl-CoA + oxalate = oxalyl-CoA + formate. The protein operates within metabolic intermediate degradation; oxalate degradation; CO(2) and formate from oxalate: step 1/2. Involved in the catabolism of oxalate and in the adapatation to low pH via the induction of the oxalate-dependent acid tolerance response (ATR). Catalyzes the transfer of the CoA moiety from formyl-CoA to oxalate. This chain is Formyl-CoA:oxalate CoA-transferase, found in Streptomyces avermitilis (strain ATCC 31267 / DSM 46492 / JCM 5070 / NBRC 14893 / NCIMB 12804 / NRRL 8165 / MA-4680).